We begin with the raw amino-acid sequence, 385 residues long: S-adenosylmethionine synthase (385 aa).

Position 15 (His-15) interacts with ATP. Residue Asp-17 coordinates Mg(2+). Glu-43 is a binding site for K(+). L-methionine contacts are provided by Glu-56 and Gln-99. Residues 99 to 109 (QSVDIAQGVDR) form a flexible loop region. ATP is bound by residues 164-166 (DAK), 230-231 (RF), Asp-239, 245-246 (RK), and Lys-266. Position 239 (Asp-239) interacts with L-methionine. Lys-270 contacts L-methionine.

Belongs to the AdoMet synthase family. Homotetramer; dimer of dimers. Mg(2+) is required as a cofactor. The cofactor is K(+).

The protein localises to the cytoplasm. It carries out the reaction L-methionine + ATP + H2O = S-adenosyl-L-methionine + phosphate + diphosphate. It functions in the pathway amino-acid biosynthesis; S-adenosyl-L-methionine biosynthesis; S-adenosyl-L-methionine from L-methionine: step 1/1. Functionally, catalyzes the formation of S-adenosylmethionine (AdoMet) from methionine and ATP. The overall synthetic reaction is composed of two sequential steps, AdoMet formation and the subsequent tripolyphosphate hydrolysis which occurs prior to release of AdoMet from the enzyme. This chain is S-adenosylmethionine synthase, found in Alkalilimnicola ehrlichii (strain ATCC BAA-1101 / DSM 17681 / MLHE-1).